Consider the following 551-residue polypeptide: L-lactate permease (551 aa).

12 helical membrane passes run 13–33 (NIWL…FALI), 37–57 (LKGY…ALLF), 69–89 (VVYG…AAVF), 131–151 (GAAG…GLGF), 159–179 (LCLI…PILV), 194–214 (MVGR…MAIM), 245–265 (IGPE…LTLF), 306–326 (FLFL…ALFA), 366–386 (FDWF…SIVW), 405–425 (LALP…SNYS), 438–458 (TGSA…FLTG), and 530–550 (IFTC…TWMI).

This sequence belongs to the lactate permease family.

It localises to the cell inner membrane. The enzyme catalyses (S)-lactate(in) + H(+)(in) = (S)-lactate(out) + H(+)(out). It catalyses the reaction (R)-lactate(in) + H(+)(in) = (R)-lactate(out) + H(+)(out). It carries out the reaction glycolate(in) + H(+)(in) = glycolate(out) + H(+)(out). Uptake of L-lactate across the membrane. Can also transport D-lactate and glycolate. Seems to be driven by a proton motive force. In Salmonella typhi, this protein is L-lactate permease (lldP).